Reading from the N-terminus, the 308-residue chain is Phosphatidate cytidylyltransferase (308 aa).

The next 8 membrane-spanning stretches (helical) occupy residues Phe30 to Ile50, Pro73 to Ile93, Pro100 to Phe120, Ile127 to Ile147, Ile167 to Phe187, Thr205 to Leu225, Phe235 to Gly255, and Met280 to Ile300.

Belongs to the CDS family.

The protein localises to the cell membrane. The catalysed reaction is a 1,2-diacyl-sn-glycero-3-phosphate + CTP + H(+) = a CDP-1,2-diacyl-sn-glycerol + diphosphate. Its pathway is phospholipid metabolism; CDP-diacylglycerol biosynthesis; CDP-diacylglycerol from sn-glycerol 3-phosphate: step 3/3. The protein is Phosphatidate cytidylyltransferase (cdsA) of Chlamydia pneumoniae (Chlamydophila pneumoniae).